Here is a 216-residue protein sequence, read N- to C-terminus: Pyrophosphatase PpaX (216 aa).

The active-site Nucleophile is the Asp9.

It belongs to the HAD-like hydrolase superfamily. PpaX family. Mg(2+) is required as a cofactor.

It carries out the reaction diphosphate + H2O = 2 phosphate + H(+). Hydrolyzes pyrophosphate formed during P-Ser-HPr dephosphorylation by HPrK/P. Might play a role in controlling the intracellular pyrophosphate pool. This is Pyrophosphatase PpaX from Bacillus cereus (strain B4264).